Consider the following 229-residue polypeptide: Potassium/proton antiporter CemA (229 aa).

Helical transmembrane passes span 114–134 and 189–209; these read IIYF…LIIL and IISG…KYWI.

This sequence belongs to the CemA family.

It localises to the plastid. The protein localises to the chloroplast inner membrane. It catalyses the reaction K(+)(in) + H(+)(out) = K(+)(out) + H(+)(in). In terms of biological role, contributes to K(+)/H(+) antiport activity by supporting proton efflux to control proton extrusion and homeostasis in chloroplasts in a light-dependent manner to modulate photosynthesis. Prevents excessive induction of non-photochemical quenching (NPQ) under continuous-light conditions. Indirectly promotes efficient inorganic carbon uptake into chloroplasts. This chain is Potassium/proton antiporter CemA, found in Lotus japonicus (Lotus corniculatus var. japonicus).